The primary structure comprises 385 residues: Pepsin A (385 aa).

Residues 1-15 (MKWLLLLSLVVLSEC) form the signal peptide. The propeptide at 16–59 (LVKVPLVRKKSLRQNLIKNGKLKDFLKTHKHNPASKYFPEAAAL) is activation peptide. The Peptidase A1 domain occupies 73–382 (YFGTIGIGTP…DRANNKVGLA (310 aa)). Asp91 is a catalytic residue. Residues Cys104 and Cys109 are joined by a disulfide bond. Residue Ser127 is modified to Phosphoserine. Cys265 and Cys269 are disulfide-bonded. Asp274 is a catalytic residue. A disulfide bond links Cys308 and Cys341.

It belongs to the peptidase A1 family. Post-translationally, minor amounts of the active enzyme occur with 'Ala-58' at the amino end.

It is found in the secreted. The enzyme catalyses Preferential cleavage: hydrophobic, preferably aromatic, residues in P1 and P1' positions. Cleaves 1-Phe-|-Val-2, 4-Gln-|-His-5, 13-Glu-|-Ala-14, 14-Ala-|-Leu-15, 15-Leu-|-Tyr-16, 16-Tyr-|-Leu-17, 23-Gly-|-Phe-24, 24-Phe-|-Phe-25 and 25-Phe-|-Tyr-26 bonds in the B chain of insulin.. Functionally, shows particularly broad specificity; although bonds involving phenylalanine and leucine are preferred, many others are also cleaved to some extent. The protein is Pepsin A (PGA) of Sus scrofa (Pig).